A 288-amino-acid chain; its full sequence is MILLALPNKGRISKPVNEILEKAGLKISVHGRSLFAQTVDPEIKVMFARAKDIPEFVRDGVADVGVTGYDLMLERDTEEELEMLLDFKFGNARLVIAAPENSTVNSIEDVKDGMKIATEFPGLTKRYLEKKGLNLEIIELSGATEIAPFIGVSDLICDLTSTGTTLQLNRLKEVENVVSSTTRLVANKKSMDDPEKSAKINQVLSGIKSVLYAQSKRLIMMNAPKDKVSEITSIIPGMGGPTVSEILSNDKMLAINAVIDENKVFETVTNLERLGARDILVVPIERIL.

It belongs to the ATP phosphoribosyltransferase family. Long subfamily. The cofactor is Mg(2+).

It localises to the cytoplasm. The catalysed reaction is 1-(5-phospho-beta-D-ribosyl)-ATP + diphosphate = 5-phospho-alpha-D-ribose 1-diphosphate + ATP. It participates in amino-acid biosynthesis; L-histidine biosynthesis; L-histidine from 5-phospho-alpha-D-ribose 1-diphosphate: step 1/9. Its activity is regulated as follows. Feedback inhibited by histidine. In terms of biological role, catalyzes the condensation of ATP and 5-phosphoribose 1-diphosphate to form N'-(5'-phosphoribosyl)-ATP (PR-ATP). Has a crucial role in the pathway because the rate of histidine biosynthesis seems to be controlled primarily by regulation of HisG enzymatic activity. This Methanococcus maripaludis (strain C5 / ATCC BAA-1333) protein is ATP phosphoribosyltransferase.